Here is a 421-residue protein sequence, read N- to C-terminus: Aspartokinase (421 aa).

7 to 10 (KYGG) is an ATP binding site. Position 25–30 (25–30 (RIVATK)) interacts with substrate. Serine 41 serves as a coordination point for ATP. Substrate is bound by residues 45–49 (DTTDE), glutamate 74, 125–126 (LD), 151–154 (RGGS), and serine 154. ATP contacts are provided by residues 174-175 (SD), 180-185 (YTADPR), and lysine 210. 2 ACT domains span residues 267-343 (VTVL…YDDQ) and 349-421 (LVGA…GTGR). Substrate is bound by residues aspartate 274, 274–279 (DKPGEA), 292–294 (NID), glutamine 298, 360–361 (VT), 374–375 (NI), and 381–382 (SE).

Belongs to the aspartokinase family. Tetramer consisting of 2 isoforms Alpha (catalytic and regulation) and of a homodimer of 2 isoforms Beta (regulation). The dimerization of the beta isoforms is stabilized by the bonding of threonine.

The enzyme catalyses L-aspartate + ATP = 4-phospho-L-aspartate + ADP. It participates in amino-acid biosynthesis; L-lysine biosynthesis via DAP pathway; (S)-tetrahydrodipicolinate from L-aspartate: step 1/4. It functions in the pathway amino-acid biosynthesis; L-methionine biosynthesis via de novo pathway; L-homoserine from L-aspartate: step 1/3. The protein operates within amino-acid biosynthesis; L-threonine biosynthesis; L-threonine from L-aspartate: step 1/5. Feedback inhibition by lysine and threonine, but he enzyme is moderately inhibited by lysine alone, and threonine alone has no effect. Catalyzes the phosphorylation of the beta-carboxyl group of aspartic acid with ATP to yield 4-phospho-L-aspartate, which is involved in the branched biosynthetic pathway leading to the biosynthesis of amino acids lysine, threonine, isoleucine and methionine. This chain is Aspartokinase (lysC), found in Corynebacterium glutamicum (strain ATCC 13032 / DSM 20300 / JCM 1318 / BCRC 11384 / CCUG 27702 / LMG 3730 / NBRC 12168 / NCIMB 10025 / NRRL B-2784 / 534).